A 427-amino-acid polypeptide reads, in one-letter code: Glutamate-1-semialdehyde 2,1-aminomutase (427 aa).

N6-(pyridoxal phosphate)lysine is present on Lys265.

The protein belongs to the class-III pyridoxal-phosphate-dependent aminotransferase family. HemL subfamily. As to quaternary structure, homodimer. It depends on pyridoxal 5'-phosphate as a cofactor.

It is found in the cytoplasm. It carries out the reaction (S)-4-amino-5-oxopentanoate = 5-aminolevulinate. Its pathway is porphyrin-containing compound metabolism; protoporphyrin-IX biosynthesis; 5-aminolevulinate from L-glutamyl-tRNA(Glu): step 2/2. The polypeptide is Glutamate-1-semialdehyde 2,1-aminomutase (Burkholderia mallei (strain NCTC 10229)).